A 464-amino-acid chain; its full sequence is Arginine biosynthesis bifunctional protein ArgJ, mitochondrial (464 aa).

Positions 191, 220, 231, 318, 459, and 464 each coordinate substrate. Residue threonine 231 is the Nucleophile of the active site.

The protein belongs to the ArgJ family. As to quaternary structure, heterodimer of an alpha and a beta chain. Post-translationally, the alpha and beta chains are autoproteolytically processed from a single precursor protein within the mitochondrion.

It is found in the mitochondrion matrix. It carries out the reaction N(2)-acetyl-L-ornithine + L-glutamate = N-acetyl-L-glutamate + L-ornithine. The enzyme catalyses L-glutamate + acetyl-CoA = N-acetyl-L-glutamate + CoA + H(+). It functions in the pathway amino-acid biosynthesis; L-arginine biosynthesis; L-ornithine and N-acetyl-L-glutamate from L-glutamate and N(2)-acetyl-L-ornithine (cyclic): step 1/1. The protein operates within amino-acid biosynthesis; L-arginine biosynthesis; N(2)-acetyl-L-ornithine from L-glutamate: step 1/4. Functionally, catalyzes two activities which are involved in the cyclic version of arginine biosynthesis: the synthesis of acetylglutamate from glutamate and acetyl-CoA, and of ornithine by transacetylation between acetylornithine and glutamate. In Pyricularia oryzae (strain 70-15 / ATCC MYA-4617 / FGSC 8958) (Rice blast fungus), this protein is Arginine biosynthesis bifunctional protein ArgJ, mitochondrial.